A 555-amino-acid chain; its full sequence is Hydroxylamine reductase (555 aa).

4 residues coordinate [4Fe-4S] cluster: C5, C8, C17, and C23. Hybrid [4Fe-2O-2S] cluster contacts are provided by H248, E272, C316, C408, C436, C461, E496, and K498. At C408 the chain carries Cysteine persulfide.

Belongs to the HCP family. [4Fe-4S] cluster serves as cofactor. Hybrid [4Fe-2O-2S] cluster is required as a cofactor.

The protein localises to the cytoplasm. It carries out the reaction A + NH4(+) + H2O = hydroxylamine + AH2 + H(+). Functionally, catalyzes the reduction of hydroxylamine to form NH(3) and H(2)O. In Natranaerobius thermophilus (strain ATCC BAA-1301 / DSM 18059 / JW/NM-WN-LF), this protein is Hydroxylamine reductase.